Here is a 1023-residue protein sequence, read N- to C-terminus: Sodium/potassium-transporting ATPase subunit alpha-1 (1023 aa).

A propeptide spanning residues 1–5 (MGKGV) is cleaved from the precursor. Residues 1–11 (MGKGVGRDKYE) are compositionally biased toward basic and acidic residues. The interval 1–39 (MGKGVGRDKYEPAAVSEHGDKKGKKAKKERDMDELKKEV) is disordered. Residues 6–96 (GRDKYEPAAV…PEWVKFCRQL (91 aa)) lie on the Cytoplasmic side of the membrane. The residue at position 9 (lysine 9) is an N6-acetyllysine. At tyrosine 10 the chain carries Phosphotyrosine. Residue serine 16 is modified to Phosphoserine. Lysine 21 carries the N6-acetyllysine modification. The span at 28–39 (KERDMDELKKEV) shows a compositional bias: basic and acidic residues. A phosphoserine mark is found at serine 40 and serine 47. The segment at 82-84 (PPP) is phosphoinositide-3 kinase binding. A helical transmembrane segment spans residues 97–117 (FGGFSMLLWIGAILCFLAYGI). At 118–129 (RSATEEEPPNDD) the chain is on the extracellular side. The helical transmembrane segment at 130–150 (LYLGVVLSAVVIITGCFSYYQ) threads the bilayer. Over 151 to 291 (EAKSSKIMES…TPIAEEIEHF (141 aa)) the chain is Cytoplasmic. Positions 216 to 235 (SSLTGESEPQTRSPDFTNEN) are disordered. Position 228 is a phosphoserine (serine 228). Tyrosine 260 is modified (phosphotyrosine). Residues 292-312 (IHLITGVAVFLGVSFFILSLI) form a helical membrane-spanning segment. The Extracellular segment spans residues 313 to 319 (LEYTWLE). The helical transmembrane segment at 320–340 (AVIFLIGIIVANVPEGLLATV) threads the bilayer. Over 341–775 (TVCLTLTAKR…RLIFDNLKKS (435 aa)) the chain is Cytoplasmic. Residue aspartate 376 is the 4-aspartylphosphate intermediate of the active site. A phosphoserine mark is found at serine 452 and serine 484. Residue lysine 487 coordinates ATP. Phosphotyrosine is present on tyrosine 542. The tract at residues 596-717 (RAAVPDAVGK…QGAIVAVTGD (122 aa)) is mediates interaction with SCN7A. Residue lysine 661 is modified to N6-succinyllysine. Residues serine 668 and serine 675 each carry the phosphoserine modification. Positions 717 and 721 each coordinate Mg(2+). A helical transmembrane segment spans residues 776–798 (IAYTLTSNIPEITPFLIFIIANI). Residues 799–801 (PLP) are Extracellular-facing. The helical transmembrane segment at 802–824 (LGTVTILCIDLGTDMVPAISLAY) threads the bilayer. Topologically, residues 825–849 (EQAESDIMKRQPRNPKTDKLVNERL) are cytoplasmic. A helical membrane pass occupies residues 850 to 872 (ISMAYGQIGMIQALGGFFTYFVI). Residues 873–915 (LAENGFLPFHLLGIRETWDDRWVNDVEDSYGQQWTYEQRKIVE) lie on the Extracellular side of the membrane. The helical transmembrane segment at 916–936 (FTCHTAFFVSIVVVQWADLVI) threads the bilayer. Topologically, residues 937 to 952 (CKTRRNSVFQQGMKNK) are cytoplasmic. Position 943 is a phosphoserine; by PKA (serine 943). A helical transmembrane segment spans residues 953–973 (ILIFGLFEETALAAFLSYCPG). Residues 974–979 (MGAALR) lie on the Extracellular side of the membrane. Residues 980–1000 (MYPLKPTWWFCAFPYSLLIFV) traverse the membrane as a helical segment. Over 1001 to 1023 (YDEVRKLIIRRRPGGWVEKETYY) the chain is Cytoplasmic.

The protein belongs to the cation transport ATPase (P-type) (TC 3.A.3) family. Type IIC subfamily. In terms of assembly, the sodium/potassium-transporting ATPase is composed of a catalytic alpha subunit, an auxiliary non-catalytic beta subunit and an additional regulatory subunit. Interacts with regulatory subunit FXYD1. Interacts with regulatory subunit FXYD3. Interacts with SIK1. Interacts with SLC35G1 and STIM1. Interacts with CLN3; this interaction regulates the sodium/potassium-transporting ATPase complex localization at the plasma membrane. Interacts with SCN7A; activates ATP1A1 P-type sodium:potassium-exchanging transporter activity which indirectly signals to nearby neurons to regulate sodium homeostasis. Post-translationally, phosphorylation on Tyr-10 modulates pumping activity. Phosphorylation of Ser-943 by PKA modulates the response of ATP1A1 to PKC. Dephosphorylation by protein phosphatase 2A (PP2A) following increases in intracellular sodium, leading to increase catalytic activity.

It localises to the cell membrane. Its subcellular location is the basolateral cell membrane. The protein resides in the sarcolemma. It is found in the cell projection. The protein localises to the axon. It localises to the melanosome. The catalysed reaction is K(+)(out) + Na(+)(in) + ATP + H2O = K(+)(in) + Na(+)(out) + ADP + phosphate + H(+). Functionally, this is the catalytic component of the active enzyme, which catalyzes the hydrolysis of ATP coupled with the exchange of sodium and potassium ions across the plasma membrane. This action creates the electrochemical gradient of sodium and potassium ions, providing the energy for active transport of various nutrients. Could also be part of an osmosensory signaling pathway that senses body-fluid sodium levels and controls salt intake behavior as well as voluntary water intake to regulate sodium homeostasis. The protein is Sodium/potassium-transporting ATPase subunit alpha-1 (Atp1a1) of Mus musculus (Mouse).